The sequence spans 151 residues: Cytochrome c oxidase subunit 5B, mitochondrial (151 aa).

A mitochondrion-targeting transit peptide spans 1-17; sequence MLRTSLTKGARLTGTRF. The Mitochondrial matrix segment spans residues 18–85; that stretch reads VQTKALSKAT…EWGPRRPVHG (68 aa). A helical transmembrane segment spans residues 86 to 108; it reads KGDVAFITKGVFLGLGISFGLFG. The Mitochondrial intermembrane segment spans residues 109 to 151; that stretch reads LVRLLANPETPKTMNREWQLKSDEYLKSKNANPWGGYSQVQSK.

This sequence belongs to the cytochrome c oxidase IV family. As to quaternary structure, component of the cytochrome c oxidase (complex IV, CIV), a multisubunit enzyme composed of 12 subunits. The complex is composed of a catalytic core of 3 subunits COX1, COX2 and COX3, encoded in the mitochondrial DNA, and 9 supernumerary subunits COX4, COX5A (or COX5B), COX6, COX7, COX8, COX9, COX12, COX13 and COX26, which are encoded in the nuclear genome. COX5A is the predominant subunit V during aerobic/normoxic growth, it gets replaced by COX5B under anaerobic/hypoxic conditions. The complex exists as a monomer or a dimer and forms supercomplexes (SCs) in the inner mitochondrial membrane with a dimer of ubiquinol-cytochrome c oxidoreductase (cytochrome b-c1 complex, complex III, CIII), resulting in 2 different assemblies (supercomplexes III(2)IV and III(2)IV(2)).

The protein localises to the mitochondrion inner membrane. It participates in energy metabolism; oxidative phosphorylation. In terms of biological role, component of the cytochrome c oxidase, the last enzyme in the mitochondrial electron transport chain which drives oxidative phosphorylation. The respiratory chain contains 3 multisubunit complexes succinate dehydrogenase (complex II, CII), ubiquinol-cytochrome c oxidoreductase (cytochrome b-c1 complex, complex III, CIII) and cytochrome c oxidase (complex IV, CIV), that cooperate to transfer electrons derived from NADH and succinate to molecular oxygen, creating an electrochemical gradient over the inner membrane that drives transmembrane transport and the ATP synthase. Cytochrome c oxidase is the component of the respiratory chain that catalyzes the reduction of oxygen to water. Electrons originating from reduced cytochrome c in the intermembrane space (IMS) are transferred via the dinuclear copper A center (CU(A)) of COX2 and heme A of COX1 to the active site in COX1, a binuclear center (BNC) formed by heme A3 and copper B (CU(B)). The BNC reduces molecular oxygen to 2 water molecules using 4 electrons from cytochrome c in the IMS and 4 protons from the mitochondrial matrix. This chain is Cytochrome c oxidase subunit 5B, mitochondrial (COX5B), found in Saccharomyces cerevisiae (strain ATCC 204508 / S288c) (Baker's yeast).